The chain runs to 182 residues: ATP synthase subunit delta (182 aa).

It belongs to the ATPase delta chain family. As to quaternary structure, F-type ATPases have 2 components, F(1) - the catalytic core - and F(0) - the membrane proton channel. F(1) has five subunits: alpha(3), beta(3), gamma(1), delta(1), epsilon(1). CF(0) has four main subunits: a(1), b(1), b'(1) and c(10-14). The alpha and beta chains form an alternating ring which encloses part of the gamma chain. F(1) is attached to F(0) by a central stalk formed by the gamma and epsilon chains, while a peripheral stalk is formed by the delta, b and b' chains.

It is found in the cellular thylakoid membrane. Functionally, f(1)F(0) ATP synthase produces ATP from ADP in the presence of a proton or sodium gradient. F-type ATPases consist of two structural domains, F(1) containing the extramembraneous catalytic core and F(0) containing the membrane proton channel, linked together by a central stalk and a peripheral stalk. During catalysis, ATP synthesis in the catalytic domain of F(1) is coupled via a rotary mechanism of the central stalk subunits to proton translocation. This protein is part of the stalk that links CF(0) to CF(1). It either transmits conformational changes from CF(0) to CF(1) or is implicated in proton conduction. In Prochlorococcus marinus (strain NATL2A), this protein is ATP synthase subunit delta.